Consider the following 393-residue polypeptide: Glycocyamine kinase (393 aa).

One can recognise a Phosphagen kinase N-terminal domain in the interval 7-94 (REKFAKENFP…FDRVIEEIHH (88 aa)). A Phosphagen kinase C-terminal domain is found at 120-362 (YVKSCRIRCG…NVLIEADKRL (243 aa)). ATP is bound by residues 123-127 (SCRIR), His-186, Arg-231, 287-291 (RASVH), 315-320 (RGTGGE), and Asp-330. Residues 367–393 (PIDDLTPRLNSSTGTSISATASRHMTL) are disordered. Residues 377 to 393 (SSTGTSISATASRHMTL) are compositionally biased toward low complexity.

This sequence belongs to the ATP:guanido phosphotransferase family. As to quaternary structure, monomer.

It carries out the reaction guanidinoacetate + ATP = phosphoguanidinoacetate + ADP + H(+). The polypeptide is Glycocyamine kinase (Hediste diversicolor (Sandworm)).